The primary structure comprises 433 residues: Transcriptional enhancer factor TEF-5 (433 aa).

A compositionally biased stretch (polar residues) spans 1 to 12; sequence MASNSWNASSSP. The interval 1-35 is disordered; sequence MASNSWNASSSPGEGREDGQDGMDKSLDNDAEGVW. A compositionally biased stretch (basic and acidic residues) spans 14 to 28; it reads EGREDGQDGMDKSLD. The TEA DNA-binding region spans 28–104; the sequence is DNDAEGVWSP…QVLARREISG (77 aa). Residues 171 to 433 form a transcriptional activation region; sequence GPSQDIKPFA…QHHVYKLVKD (263 aa).

As to expression, high levels in cardiac muscle, low in skeletal muscle. Intermediate levels in gizzard and lung, low levels in kidney.

It is found in the nucleus. Transcription factor which plays a key role in the Hippo signaling pathway, a pathway involved in organ size control and tumor suppression by restricting proliferation and promoting apoptosis. The core of this pathway is composed of a kinase cascade wherein MST1/MST2, in complex with its regulatory protein SAV1, phosphorylates and activates LATS1/2 in complex with its regulatory protein MOB1, which in turn phosphorylates and inactivates YAP1 oncoprotein and WWTR1/TAZ. This Gallus gallus (Chicken) protein is Transcriptional enhancer factor TEF-5 (TEAD3).